We begin with the raw amino-acid sequence, 145 residues long: Cytochrome c-type biogenesis protein CcmE (145 aa).

The Cytoplasmic segment spans residues 1–7 (MKAKHQR). A helical; Signal-anchor for type II membrane protein transmembrane segment spans residues 8-28 (LILAVAALCGVAGAGVLAASA). The Periplasmic portion of the chain corresponds to 29–145 (LRDEAAYFRT…PKNMKAAVEG (117 aa)). The heme site is built by H123 and Y127.

This sequence belongs to the CcmE/CycJ family.

Its subcellular location is the cell inner membrane. Its function is as follows. Heme chaperone required for the biogenesis of c-type cytochromes. Transiently binds heme delivered by CcmC and transfers the heme to apo-cytochromes in a process facilitated by CcmF and CcmH. This Sphingopyxis alaskensis (strain DSM 13593 / LMG 18877 / RB2256) (Sphingomonas alaskensis) protein is Cytochrome c-type biogenesis protein CcmE.